A 131-amino-acid chain; its full sequence is Glycine cleavage system H protein (131 aa).

The 83-residue stretch at 24 to 106 (TVRIGITDYA…YGEGWLVDLE (83 aa)) folds into the Lipoyl-binding domain. Lysine 65 carries the N6-lipoyllysine modification.

The protein belongs to the GcvH family. The glycine cleavage system is composed of four proteins: P, T, L and H. The cofactor is (R)-lipoate.

In terms of biological role, the glycine cleavage system catalyzes the degradation of glycine. The H protein shuttles the methylamine group of glycine from the P protein to the T protein. The polypeptide is Glycine cleavage system H protein (Mycobacteroides abscessus (strain ATCC 19977 / DSM 44196 / CCUG 20993 / CIP 104536 / JCM 13569 / NCTC 13031 / TMC 1543 / L948) (Mycobacterium abscessus)).